A 304-amino-acid chain; its full sequence is Quinolinate synthase (304 aa).

Residues histidine 24 and serine 41 each coordinate iminosuccinate. Cysteine 86 lines the [4Fe-4S] cluster pocket. Residues 112-114 (YVN) and serine 129 each bind iminosuccinate. Cysteine 171 contributes to the [4Fe-4S] cluster binding site. Iminosuccinate-binding positions include 197-199 (HPE) and threonine 214. Cysteine 259 is a [4Fe-4S] cluster binding site.

Belongs to the quinolinate synthase family. Type 2 subfamily. The cofactor is [4Fe-4S] cluster.

The protein resides in the cytoplasm. The enzyme catalyses iminosuccinate + dihydroxyacetone phosphate = quinolinate + phosphate + 2 H2O + H(+). Its pathway is cofactor biosynthesis; NAD(+) biosynthesis; quinolinate from iminoaspartate: step 1/1. Functionally, catalyzes the condensation of iminoaspartate with dihydroxyacetone phosphate to form quinolinate. The sequence is that of Quinolinate synthase from Geobacter metallireducens (strain ATCC 53774 / DSM 7210 / GS-15).